A 262-amino-acid chain; its full sequence is WW domain-binding protein 2 (262 aa).

The GRAM domain occupies 1 to 84 (MALNKNHSEG…YLMKDCEVKQ (84 aa)). A Phosphotyrosine modification is found at Y192. Residues 196 to 200 (PPPPY) carry the PPxY motif 1 motif. Residues 197–206 (PPPYPGPMEP) show a composition bias toward pro residues. The interval 197-262 (PPPYPGPMEP…YYPPEDKKTQ (66 aa)) is disordered. The segment covering 219 to 231 (AAEAKAAEAAASA) has biased composition (low complexity). Phosphotyrosine is present on Y232. Residues 246 to 255 (SQPPPPPYYP) show a composition bias toward pro residues. The short motif at 249–253 (PPPPY) is the PPxY motif 2 element.

In terms of assembly, binds to the WW domain of YAP1, WWP1 and WWP2. Interacts with NEDD4. Interacts with ESR1 and UBE3A. In terms of processing, phosphorylated in repsonse to EGF as well as estrogen and progesterone hormones. Tyr-192 and Tyr-232 are phosphorylated by YES and SRC inducing nuclear translocation.

Its subcellular location is the cytoplasm. The protein resides in the nucleus. Its function is as follows. Acts as a transcriptional coactivator of estrogen and progesterone receptors (ESR1 and PGR) upon hormone activation. In presence of estrogen, binds to ESR1-responsive promoters. Synergizes with YAP1 to enhance PGR activity. Modulates expression of post-synaptic scaffolding proteins via regulation of ESR1, ESR2 and PGR. This Rattus norvegicus (Rat) protein is WW domain-binding protein 2 (Wbp2).